We begin with the raw amino-acid sequence, 143 residues long: Putative complexin-1 (143 aa).

Residues 16–72 form a disordered region; the sequence is EVTGGLGMKDDGGEKTETGEDPEVIAARLEQEERRKEKHRKMENEREKMRQGIRDKY. 2 stretches are compositionally biased toward basic and acidic residues: residues 23–33 and 44–72; these read MKDDGGEKTET and LEQE…RDKY. A coiled-coil region spans residues 40–71; the sequence is IAARLEQEERRKEKHRKMENEREKMRQGIRDK.

The protein belongs to the complexin/synaphin family.

It localises to the cytoplasm. It is found in the cytosol. In terms of biological role, positively regulates a late step in synaptic vesicle exocytosis. This chain is Putative complexin-1 (cpx-1), found in Caenorhabditis elegans.